A 134-amino-acid chain; its full sequence is Agouti-related protein (134 aa).

Positions 1-20 are cleaved as a signal peptide; that stretch reads MLTAVLLSCALLLAMPPLQG. Residues 21-84 constitute a propeptide that is removed on maturation; that stretch reads AQMGPAPLEG…VLDPEGRKPR (64 aa). Disulfide bonds link C89/C104, C96/C110, C103/C121, C107/C131, and C112/C119. One can recognise an Agouti domain in the interval 89–131; the sequence is CVRLHESCLGHQVPCCDPCATCYCRFFNAFCYCRKLGTTTNPC. Residues 113 to 115 form an interaction with melanocortin receptors region; the sequence is RFF.

In terms of assembly, interacts with melanocortin receptors MC3R, MC4R and MC5R.

It localises to the secreted. Its subcellular location is the golgi apparatus lumen. Functionally, plays a role in weight homeostasis. Involved in the control of feeding behavior through the central melanocortin system. Acts as alpha melanocyte-stimulating hormone antagonist by inhibiting cAMP production mediated by stimulation of melanocortin receptors within the hypothalamus and adrenal gland. Has very low activity with MC5R. Is an inverse agonist for MC3R and MC4R being able to suppress their constitutive activity. It promotes MC3R and MC4R endocytosis in an arrestin-dependent manner. The chain is Agouti-related protein (AGRP) from Bos taurus (Bovine).